Consider the following 665-residue polypeptide: Probable potassium transport system protein Kup 2 (665 aa).

The next 13 membrane-spanning stretches (helical) occupy residues 13 to 33 (GLLV…LYVM), 55 to 75 (ISLI…LIAL), 98 to 118 (WLVL…TLTP), 138 to 158 (IPVP…LFLF), 167 to 187 (IIGK…GLTG), 195 to 215 (LSLL…SPAN), 217 to 237 (VGVL…ALYS), 250 to 270 (SWPY…VWIL), 295 to 315 (FFAI…LITG), 344 to 364 (IFIP…VFLF), 375 to 395 (GLAI…YLSL), 400 to 420 (ILLR…FLIS), and 428 to 448 (GGYV…IWYF).

The protein belongs to the HAK/KUP transporter (TC 2.A.72) family.

The protein localises to the cell membrane. It carries out the reaction K(+)(in) + H(+)(in) = K(+)(out) + H(+)(out). Functionally, transport of potassium into the cell. Likely operates as a K(+):H(+) symporter. In Lactobacillus johnsonii (strain CNCM I-12250 / La1 / NCC 533), this protein is Probable potassium transport system protein Kup 2.